Consider the following 95-residue polypeptide: Putative defensin-like protein 262 (95 aa).

The first 26 residues, 1–26 (MEKTSLKLIFLFSLTVIAFCSSLGDA), serve as a signal peptide directing secretion. Disulfide bonds link cysteine 48-cysteine 95, cysteine 64-cysteine 83, cysteine 70-cysteine 91, and cysteine 74-cysteine 93.

This sequence belongs to the DEFL family.

Its subcellular location is the secreted. The polypeptide is Putative defensin-like protein 262 (Arabidopsis thaliana (Mouse-ear cress)).